The sequence spans 311 residues: Probable cell division protein WhiA (311 aa).

Positions 274-307 (SLKELGSLLTPPLTKSGVNHRFRKLELIAEKIRN) form a DNA-binding region, H-T-H motif.

Belongs to the WhiA family.

In terms of biological role, involved in cell division and chromosome segregation. The polypeptide is Probable cell division protein WhiA (Carboxydothermus hydrogenoformans (strain ATCC BAA-161 / DSM 6008 / Z-2901)).